The sequence spans 259 residues: Phosphatidylserine decarboxylase proenzyme (259 aa).

Serine 183 (schiff-base intermediate with substrate; via pyruvic acid) is an active-site residue. Serine 183 is modified (pyruvic acid (Ser); by autocatalysis).

Belongs to the phosphatidylserine decarboxylase family. PSD-A subfamily. In terms of assembly, heterodimer of a large membrane-associated beta subunit and a small pyruvoyl-containing alpha subunit. Requires pyruvate as cofactor. In terms of processing, is synthesized initially as an inactive proenzyme. Formation of the active enzyme involves a self-maturation process in which the active site pyruvoyl group is generated from an internal serine residue via an autocatalytic post-translational modification. Two non-identical subunits are generated from the proenzyme in this reaction, and the pyruvate is formed at the N-terminus of the alpha chain, which is derived from the carboxyl end of the proenzyme. The post-translation cleavage follows an unusual pathway, termed non-hydrolytic serinolysis, in which the side chain hydroxyl group of the serine supplies its oxygen atom to form the C-terminus of the beta chain, while the remainder of the serine residue undergoes an oxidative deamination to produce ammonia and the pyruvoyl prosthetic group on the alpha chain.

Its subcellular location is the cell membrane. The enzyme catalyses a 1,2-diacyl-sn-glycero-3-phospho-L-serine + H(+) = a 1,2-diacyl-sn-glycero-3-phosphoethanolamine + CO2. It functions in the pathway phospholipid metabolism; phosphatidylethanolamine biosynthesis; phosphatidylethanolamine from CDP-diacylglycerol: step 2/2. Functionally, catalyzes the formation of phosphatidylethanolamine (PtdEtn) from phosphatidylserine (PtdSer). The chain is Phosphatidylserine decarboxylase proenzyme from Neisseria gonorrhoeae (strain ATCC 700825 / FA 1090).